The sequence spans 358 residues: Acyl-CoA Delta-12 desaturase (358 aa).

The next 2 membrane-spanning stretches (helical) occupy residues 30-50 (IILY…AMFY) and 55-75 (TVFY…AGSH). Residues His75, His80, His112, His115, and His116 each coordinate Fe cation. The short motif at 75-80 (HRLWAH) is the Histidine box-1 element. A Histidine box-2 motif is present at residues 112-116 (HRVHH). A run of 2 helical transmembrane segments spans residues 175-195 (TFFA…YFWG) and 200-220 (TAFF…TFLV). Positions 225, 254, 257, and 258 each coordinate Fe cation. Residues 254 to 258 (HNYHH) carry the Histidine box-3 motif.

The protein belongs to the fatty acid desaturase type 1 family. Fe(2+) is required as a cofactor.

It localises to the membrane. It catalyses the reaction (9Z)-octadecenoyl-CoA + 2 Fe(II)-[cytochrome b5] + O2 + 2 H(+) = (9Z,12Z)-octadecadienoyl-CoA + 2 Fe(III)-[cytochrome b5] + 2 H2O. It carries out the reaction (9Z)-hexadecenoyl-CoA + 2 Fe(II)-[cytochrome b5] + O2 + 2 H(+) = (9Z,12Z)-hexadecadienoyl-CoA + 2 Fe(III)-[cytochrome b5] + 2 H2O. Catalyzes the formation of a Delta12 double bond, acting on monounsaturated fatty acyl substrates like palmitoleoyl-CoA ((9Z)-hexadecenoyl-CoA) and oleoyl-CoA ((9Z)-octadecenoyl-CoA) with higher desaturation activity on (9Z)-octadecenoyl-CoA than (9Z)-hexadecenoyl-CoA. Requires preexisting cis double bond at the Delta9 position of fatty acyls to be able to insert the Delta12 double bond. Delta12-desaturation of (9Z)-octadecenoyl-CoA in insects produces (9Z,12Z)-octadecadienoyl-CoA (linoleoyl-CoA) which may be used to supply precursors of crucial mediators of immunity and reproduction and other essential functions. In Tribolium castaneum (Red flour beetle), this protein is Acyl-CoA Delta-12 desaturase.